A 709-amino-acid polypeptide reads, in one-letter code: Leucine-rich repeat and calponin homology domain-containing protein 1 (709 aa).

Positions 24–37 (LHQHHQHHQHHQHH) are enriched in basic residues. The disordered stretch occupies residues 24 to 49 (LHQHHQHHQHHQHHGGTGGTGFNLPL). LRR repeat units lie at residues 60–83 (AANS…TAPG), 86–108 (LSDT…ELCQ), 109–131 (FVSL…AIVN), 132–155 (LQML…LCGL), 157–176 (LKVL…EIGQ), 177–199 (LKQL…QIGQ), 200–223 (LKSL…LVDL), 225–244 (LVKF…CFRE), and 245–268 (MKQL…ICTK). Basic and acidic residues-rich tracts occupy residues 301–312 (HQHVEDSKKDSD) and 381–390 (QEREQLAGRA). Positions 301–390 (HQHVEDSKKD…QEREQLAGRA (90 aa)) are disordered. A phosphoserine mark is found at serine 395, serine 518, and serine 522. The segment at 504–526 (SNGSQYSPNEIRENSPSVSPTAN) is disordered. At threonine 581 the chain carries Phosphothreonine. Residues 589 to 702 (MREEKELVEQ…TTVQALLDVT (114 aa)) enclose the Calponin-homology (CH) domain.

Interacts (via LRR repeats) with unphosphorylated DOCK8 (via DHR-2 domain); the interaction prevents the association between DOCK8 and CDC42.

It localises to the cytoplasm. Functionally, acts as a negative regulator of GTPase CDC42 by sequestering CDC42-guanine exchange factor DOCK8. Probably by preventing CDC42 activation, negatively regulates CD4(+) T-cell migration in response to chemokine stimulation. In Mus musculus (Mouse), this protein is Leucine-rich repeat and calponin homology domain-containing protein 1 (Lrch1).